We begin with the raw amino-acid sequence, 311 residues long: 4-diphosphocytidyl-2-C-methyl-D-erythritol kinase (311 aa).

Lys16 is an active-site residue. 101–111 (PVAGGMAGGSA) is a binding site for ATP. Asp143 is a catalytic residue.

This sequence belongs to the GHMP kinase family. IspE subfamily.

The enzyme catalyses 4-CDP-2-C-methyl-D-erythritol + ATP = 4-CDP-2-C-methyl-D-erythritol 2-phosphate + ADP + H(+). Its pathway is isoprenoid biosynthesis; isopentenyl diphosphate biosynthesis via DXP pathway; isopentenyl diphosphate from 1-deoxy-D-xylulose 5-phosphate: step 3/6. Functionally, catalyzes the phosphorylation of the position 2 hydroxy group of 4-diphosphocytidyl-2C-methyl-D-erythritol. In Rhodococcus jostii (strain RHA1), this protein is 4-diphosphocytidyl-2-C-methyl-D-erythritol kinase.